A 102-amino-acid polypeptide reads, in one-letter code: Small ribosomal subunit protein uS10 (102 aa).

This sequence belongs to the universal ribosomal protein uS10 family. As to quaternary structure, part of the 30S ribosomal subunit.

In terms of biological role, involved in the binding of tRNA to the ribosomes. In Coprothermobacter proteolyticus (strain ATCC 35245 / DSM 5265 / OCM 4 / BT), this protein is Small ribosomal subunit protein uS10.